Reading from the N-terminus, the 116-residue chain is Small ribosomal subunit protein uS13m (116 aa).

The tract at residues 92 to 116 (HQDGSPLRGQRTHTNARTARKQIRK) is disordered.

Belongs to the universal ribosomal protein uS13 family. As to quaternary structure, part of the small ribosomal subunit.

The protein localises to the mitochondrion. Functionally, located at the top of the head of the small subunit, it contacts several helices of the 18S rRNA. In Triticum aestivum (Wheat), this protein is Small ribosomal subunit protein uS13m (RPS13).